The chain runs to 128 residues: Glycophorin-C (128 aa).

A compositionally biased stretch (polar residues) spans 1-12 (MWSTRSPNSTAW). The segment at 1–48 (MWSTRSPNSTAWPLSLEPDPGMASASTTMHTTTIAEPDPGMSGWPDGR) is disordered. The Extracellular segment spans residues 1–57 (MWSTRSPNSTAWPLSLEPDPGMASASTTMHTTTIAEPDPGMSGWPDGRMETSTPTIM). O-linked (GalNAc...) serine glycosylation occurs at S3. A glycan (O-linked (GalNAc...) threonine) is linked at T4. O-linked (GalNAc...) serine glycosylation occurs at S6. N8 carries an N-linked (GlcNAc...) asparagine glycan. S9 carries O-linked (GalNAc...) serine glycosylation. O-linked (GalNAc...) threonine glycosylation is present at T10. O-linked (GalNAc...) serine glycosylation is found at S15, S24, and S26. Low complexity predominate over residues 22 to 33 (MASASTTMHTTT). O-linked (GalNAc...) threonine glycosylation is found at T27, T28, T31, T32, and T33. An O-linked (GalNAc...) serine glycan is attached at S42. Residues 58–81 (DIVVIAGVIAAVAIVLVSLLFVML) traverse the membrane as a helical; Signal-anchor for type III membrane protein segment. Residues 82–128 (RYMYRHKGTYHTNEAKGTEFAESADAALQGDPALQDAGDSSRKEYFI) are Cytoplasmic-facing. Residues S104 and S122 each carry the phosphoserine modification. Positions 108 to 128 (ALQGDPALQDAGDSSRKEYFI) are disordered.

This sequence belongs to the glycophorin-C family. Post-translationally, O-glycosylated with core 1 or possibly core 8 glycans. As to expression, glycophorin-C is expressed in erythrocytes. Glycophorin-D and IsoGPC are ubiquitously expressed.

Its subcellular location is the cell membrane. Its function is as follows. This protein is a minor sialoglycoprotein in human erythrocyte membranes. The blood group Gerbich antigens and receptors for Plasmodium falciparum merozoites are most likely located within the extracellular domain. Glycophorin-C plays an important role in regulating the stability of red cells. In Homo sapiens (Human), this protein is Glycophorin-C (GYPC).